The chain runs to 151 residues: Guanylate kinase homolog (151 aa).

The 141-residue stretch at 1–141 (MEREGVDYHY…AYSKLIQILQ (141 aa)) folds into the Guanylate kinase-like domain.

The protein belongs to the guanylate kinase family.

In Vaccinia virus (strain Copenhagen) (VACV), this protein is Guanylate kinase homolog.